The chain runs to 79 residues: Conotoxin Cal9.2a (79 aa).

Positions 1–23 (MNCYLILTVALLLTSAMTGTTTA) are cleaved as a signal peptide. Residues 24 to 33 (GQLNKKGVTL) constitute a propeptide that is removed on maturation. Cystine bridges form between Cys-41-Cys-58, Cys-46-Cys-68, and Cys-48-Cys-73.

Expressed by the venom duct.

The protein resides in the secreted. Probable neurotoxin with unknown target. Possibly targets ion channels. The polypeptide is Conotoxin Cal9.2a (Californiconus californicus (California cone)).